Reading from the N-terminus, the 339-residue chain is DNA-directed RNA polymerase subunit alpha (339 aa).

Residues 1-233 form an alpha N-terminal domain (alpha-NTD) region; that stretch reads MVREEVAGST…DLFLPFLHAE (233 aa). Residues 266 to 339 form an alpha C-terminal domain (alpha-CTD) region; the sequence is GIPLNCIFID…IDLLKNKLSF (74 aa).

It belongs to the RNA polymerase alpha chain family. In plastids the minimal PEP RNA polymerase catalytic core is composed of four subunits: alpha, beta, beta', and beta''. When a (nuclear-encoded) sigma factor is associated with the core the holoenzyme is formed, which can initiate transcription.

The protein resides in the plastid. It localises to the chloroplast. It catalyses the reaction RNA(n) + a ribonucleoside 5'-triphosphate = RNA(n+1) + diphosphate. Its function is as follows. DNA-dependent RNA polymerase catalyzes the transcription of DNA into RNA using the four ribonucleoside triphosphates as substrates. This is DNA-directed RNA polymerase subunit alpha from Aegilops speltoides (Goatgrass).